Reading from the N-terminus, the 309-residue chain is Elongation factor Ts (309 aa).

The tract at residues 82–85 (TDFV) is involved in Mg(2+) ion dislocation from EF-Tu.

This sequence belongs to the EF-Ts family.

It is found in the cytoplasm. Associates with the EF-Tu.GDP complex and induces the exchange of GDP to GTP. It remains bound to the aminoacyl-tRNA.EF-Tu.GTP complex up to the GTP hydrolysis stage on the ribosome. The chain is Elongation factor Ts from Rickettsia peacockii (strain Rustic).